Reading from the N-terminus, the 626-residue chain is uncharacterized protein (626 aa).

This is an uncharacterized protein from Dictyostelium discoideum (Social amoeba).